Consider the following 342-residue polypeptide: Renalase (342 aa).

The N-terminal stretch at 1–17 is a signal peptide; the sequence is MSRVLVVGAGLTGSLCA. FAD contacts are provided by residues threonine 12, arginine 42, and 61 to 62; that span reads QY.

Belongs to the renalase family. The cofactor is FAD. As to expression, expressed predominantly in kidney and testis with lower levels in liver, heart and embryo and weak expression in brain and skeletal muscle.

It is found in the secreted. It catalyses the reaction 1,2-dihydro-beta-NAD + O2 + H(+) = H2O2 + NAD(+). It carries out the reaction 1,2-dihydro-beta-NADP + O2 + H(+) = H2O2 + NADP(+). The enzyme catalyses 1,6-dihydro-beta-NADP + O2 + H(+) = H2O2 + NADP(+). The catalysed reaction is 1,6-dihydro-beta-NAD + O2 + H(+) = H2O2 + NAD(+). Catalyzes the oxidation of the less abundant 1,2-dihydro-beta-NAD(P) and 1,6-dihydro-beta-NAD(P) to form beta-NAD(P)(+). The enzyme hormone is secreted by the kidney, and circulates in blood and modulates cardiac function and systemic blood pressure. Lowers blood pressure in vivo by decreasing cardiac contractility and heart rate and preventing a compensatory increase in peripheral vascular tone, suggesting a causal link to the increased plasma catecholamine and heightened cardiovascular risk. High concentrations of catecholamines activate plasma renalase and promotes its secretion and synthesis. The polypeptide is Renalase (Mus musculus (Mouse)).